Consider the following 206-residue polypeptide: ATP-dependent dethiobiotin synthetase BioD (206 aa).

An ATP-binding site is contributed by 12 to 17; it reads GVGKTI. Thr-16 contributes to the Mg(2+) binding site. Lys-32 is a catalytic residue. His-46 and Glu-98 together coordinate Mg(2+). Residue 98–101 participates in ATP binding; it reads EGAG.

Belongs to the dethiobiotin synthetase family. In terms of assembly, homodimer. The cofactor is Mg(2+).

Its subcellular location is the cytoplasm. It carries out the reaction (7R,8S)-7,8-diammoniononanoate + CO2 + ATP = (4R,5S)-dethiobiotin + ADP + phosphate + 3 H(+). Its pathway is cofactor biosynthesis; biotin biosynthesis; biotin from 7,8-diaminononanoate: step 1/2. Functionally, catalyzes a mechanistically unusual reaction, the ATP-dependent insertion of CO2 between the N7 and N8 nitrogen atoms of 7,8-diaminopelargonic acid (DAPA, also called 7,8-diammoniononanoate) to form a ureido ring. This Novosphingobium aromaticivorans (strain ATCC 700278 / DSM 12444 / CCUG 56034 / CIP 105152 / NBRC 16084 / F199) protein is ATP-dependent dethiobiotin synthetase BioD.